We begin with the raw amino-acid sequence, 92 residues long: uncharacterized protein (92 aa).

This is an uncharacterized protein from Methanocaldococcus jannaschii (strain ATCC 43067 / DSM 2661 / JAL-1 / JCM 10045 / NBRC 100440) (Methanococcus jannaschii).